Here is a 950-residue protein sequence, read N- to C-terminus: MORC family CW-type zinc finger protein 1 (950 aa).

Residues 281-342 are a coiled coil; it reads KGKFKTEVQK…TKHKSLRQKQ (62 aa). The CW-type zinc-finger motif lies at 465 to 530; the sequence is SLESLQWRRR…SCNQIERLPS (66 aa). Zn(2+)-binding residues include Cys-485, Cys-488, Cys-511, and Cys-522. Disordered stretches follow at residues 532–551 and 679–700; these read PLGT…RQLQ and KKQQ…ASSR. Over residues 541–550 the composition is skewed to basic and acidic residues; the sequence is PSKDERERQL. Positions 885-916 form a coiled coil; it reads LGQCELKRKRTEEKLSDLRAKLALLLQKLQLG.

Expressed at very low level in male germ cells.

The protein localises to the nucleus. Its function is as follows. Required for spermatogenesis. Essential for de novo DNA methylation and silencing of transposable elements in the male embryonic germ cells. Not required for piRNA biosynthesis. The sequence is that of MORC family CW-type zinc finger protein 1 from Mus musculus (Mouse).